The chain runs to 143 residues: Deoxyuridine 5'-triphosphate nucleotidohydrolase (143 aa).

Residues 63-65 (RSG), Asn76, 80-82 (TID), and Lys90 each bind substrate.

It belongs to the dUTPase family. Mg(2+) is required as a cofactor.

It carries out the reaction dUTP + H2O = dUMP + diphosphate + H(+). The protein operates within pyrimidine metabolism; dUMP biosynthesis; dUMP from dCTP (dUTP route): step 2/2. Functionally, this enzyme is involved in nucleotide metabolism: it produces dUMP, the immediate precursor of thymidine nucleotides and it decreases the intracellular concentration of dUTP so that uracil cannot be incorporated into DNA. The polypeptide is Deoxyuridine 5'-triphosphate nucleotidohydrolase (Finegoldia magna (strain ATCC 29328 / DSM 20472 / WAL 2508) (Peptostreptococcus magnus)).